The primary structure comprises 526 residues: Organic cation/carnitine transporter 4 (526 aa).

The Cytoplasmic segment spans residues 1–52 (MESPEDRNGNDVRQPLLEKIPVKKEAEGEERLCIDEMLQRYCGEFGRWQLKH). Residues 53-73 (FVLTCIAWALEAFHTMVMIFA) form a helical membrane-spanning segment. Residues 74–123 (DQEPEWRCVGSDCRVGSLNCELDPSSWEWTAGKGSSTVSEWGLICGDKYK) lie on the Extracellular side of the membrane. A helical transmembrane segment spans residues 124–144 (VGLVQALFFAGCMIGAGVFGH). The Cytoplasmic segment spans residues 145–153 (LSDSKLGRK). Residues 154–174 (GSLTVVCIINAIFGIATAFSP) traverse the membrane as a helical segment. Topologically, residues 175 to 179 (NYWTY) are extracellular. Residues 180 to 200 (VVLRFLTGFSTGGVGLTAFVL) traverse the membrane as a helical segment. Residue 201–208 (ATEPIGPS) participates in ATP binding. Residues 201–214 (ATEPIGPSKRGVAG) are Cytoplasmic-facing. A helical membrane pass occupies residues 215-235 (MSTFYFFSAGIAVLSGIAYVF). Residues 236–240 (RSWRE) lie on the Extracellular side of the membrane. The helical transmembrane segment at 241-261 (LFIVSSLPSLLFLLIVIPFIS) threads the bilayer. Residues 262 to 331 (ESPRWYLVRG…ILSPLMRMRL (70 aa)) are Cytoplasmic-facing. Residues 332 to 352 (VISVAISFTVSIVYYGLSLNV) form a helical membrane-spanning segment. Topologically, residues 353–360 (GNLKTNLY) are extracellular. A helical membrane pass occupies residues 361–381 (LNVFVNAVSEMPAFAITAVLL). The Cytoplasmic portion of the chain corresponds to 382–390 (DKYGRKPLS). A helical membrane pass occupies residues 391 to 411 (IGTQWFSCVFCLVGFSVWGAG). At 412–418 (PWKSVRM) the chain is on the extracellular side. Residues 419-439 (VSGVLGIFGMAGTYNLLFIYI) traverse the membrane as a helical segment. At 440-451 (AELFPTVVRNAA) the chain is on the cytoplasmic side. Residues 452–472 (LGCATQAAQMGAILAPFVVVL) traverse the membrane as a helical segment. Residues 473–475 (GEE) lie on the Extracellular side of the membrane. The chain crosses the membrane as a helical span at residues 476–496 (LPFGVFAVCGLVGGGLAFYLP). At 497–526 (ETLNKPLYDTMFGMHEAESESNRERGEVIC) the chain is on the cytoplasmic side.

It belongs to the major facilitator (TC 2.A.1) superfamily. Organic cation transporter (TC 2.A.1.19) family. As to expression, mostly expressed in siliques, and, to a lower extent, in stems, leaves, flowers and siliques. Present in pollen. In the stems of secondary inflorescences present in the phloem cells and xylem parenchyma cells.

Its subcellular location is the vacuole membrane. Functionally, high affinity carnitine transporter involved in the active cellular uptake of carnitine. Also transports organic cations. The chain is Organic cation/carnitine transporter 4 (OCT4) from Arabidopsis thaliana (Mouse-ear cress).